Here is a 103-residue protein sequence, read N- to C-terminus: MYAVFQSGGKQHRVSEGQTLRLEKLEAETGANVEFDCVLLVANGEEVTVGAPFVTGGKVTAEVVTHGRGDKIKVVKFRRRKHSRKQMGHRQWFTEVKITGISA.

Belongs to the bacterial ribosomal protein bL21 family. Part of the 50S ribosomal subunit. Contacts protein L20.

Its function is as follows. This protein binds to 23S rRNA in the presence of protein L20. The sequence is that of Large ribosomal subunit protein bL21 from Photobacterium profundum (strain SS9).